The following is a 225-amino-acid chain: uncharacterized protein (225 aa).

Residues E69, E71, and D100 each coordinate a divalent metal cation.

The protein belongs to the FAH family.

This is an uncharacterized protein from Pyrococcus abyssi (strain GE5 / Orsay).